Consider the following 228-residue polypeptide: Sensory transduction protein RegX3 (228 aa).

The region spanning 3–116 (SVLIVEDEES…ELIARIRAVL (114 aa)) is the Response regulatory domain. 4-aspartylphosphate is present on Asp52. Positions 129–228 (DGVLEAGPVR…VRGLGYKLEG (100 aa)) form a DNA-binding region, ompR/PhoB-type.

Phosphorylated by SenX3.

In terms of biological role, member of the two-component regulatory system SenX3/RegX3 involved in stress response. The system is involved in phosphate starvation response. Once phosphorylated by SenX3, activates the expression of the alkaline phosphatase phoA, the high-affinity phosphate transporter pstSCAB, phnDCE, phnF and senX3. May act as a negative regulator of NhaA. Acts by binding to a DNA motif consisting of an inverted repeat. The protein is Sensory transduction protein RegX3 of Mycolicibacterium smegmatis (strain ATCC 700084 / mc(2)155) (Mycobacterium smegmatis).